We begin with the raw amino-acid sequence, 365 residues long: tRNA 2-selenouridine synthase (365 aa).

In terms of domain architecture, Rhodanese spans 15-138 (FIAGQPLIDL…MRQYLIGVIE (124 aa)). Cysteine 98 (S-selanylcysteine intermediate) is an active-site residue.

It belongs to the SelU family. In terms of assembly, monomer.

The enzyme catalyses 5-methylaminomethyl-2-thiouridine(34) in tRNA + selenophosphate + (2E)-geranyl diphosphate + H2O + H(+) = 5-methylaminomethyl-2-selenouridine(34) in tRNA + (2E)-thiogeraniol + phosphate + diphosphate. It catalyses the reaction 5-methylaminomethyl-2-thiouridine(34) in tRNA + (2E)-geranyl diphosphate = 5-methylaminomethyl-S-(2E)-geranyl-thiouridine(34) in tRNA + diphosphate. It carries out the reaction 5-methylaminomethyl-S-(2E)-geranyl-thiouridine(34) in tRNA + selenophosphate + H(+) = 5-methylaminomethyl-2-(Se-phospho)selenouridine(34) in tRNA + (2E)-thiogeraniol. The catalysed reaction is 5-methylaminomethyl-2-(Se-phospho)selenouridine(34) in tRNA + H2O = 5-methylaminomethyl-2-selenouridine(34) in tRNA + phosphate. Its function is as follows. Involved in the post-transcriptional modification of the uridine at the wobble position (U34) of tRNA(Lys), tRNA(Glu) and tRNA(Gln). Catalyzes the conversion of 2-thiouridine (S2U-RNA) to 2-selenouridine (Se2U-RNA). Acts in a two-step process involving geranylation of 2-thiouridine (S2U) to S-geranyl-2-thiouridine (geS2U) and subsequent selenation of the latter derivative to 2-selenouridine (Se2U) in the tRNA chain. The protein is tRNA 2-selenouridine synthase of Shewanella sp. (strain ANA-3).